A 162-amino-acid polypeptide reads, in one-letter code: NADH-quinone oxidoreductase subunit I (162 aa).

2 4Fe-4S ferredoxin-type domains span residues 53–83 and 93–122; these read LRRY…IESE and TRYD…ETHI. Positions 63, 66, 69, 73, 102, 105, 108, and 112 each coordinate [4Fe-4S] cluster.

This sequence belongs to the complex I 23 kDa subunit family. In terms of assembly, NDH-1 is composed of 14 different subunits. Subunits NuoA, H, J, K, L, M, N constitute the membrane sector of the complex. Requires [4Fe-4S] cluster as cofactor.

The protein localises to the cell inner membrane. It catalyses the reaction a quinone + NADH + 5 H(+)(in) = a quinol + NAD(+) + 4 H(+)(out). In terms of biological role, NDH-1 shuttles electrons from NADH, via FMN and iron-sulfur (Fe-S) centers, to quinones in the respiratory chain. The immediate electron acceptor for the enzyme in this species is believed to be ubiquinone. Couples the redox reaction to proton translocation (for every two electrons transferred, four hydrogen ions are translocated across the cytoplasmic membrane), and thus conserves the redox energy in a proton gradient. The chain is NADH-quinone oxidoreductase subunit I from Bordetella bronchiseptica (strain ATCC BAA-588 / NCTC 13252 / RB50) (Alcaligenes bronchisepticus).